The chain runs to 299 residues: Methionyl-tRNA formyltransferase (299 aa).

Position 109–112 (109–112) interacts with (6S)-5,6,7,8-tetrahydrofolate; sequence SLLP.

The protein belongs to the Fmt family.

The enzyme catalyses L-methionyl-tRNA(fMet) + (6R)-10-formyltetrahydrofolate = N-formyl-L-methionyl-tRNA(fMet) + (6S)-5,6,7,8-tetrahydrofolate + H(+). Functionally, attaches a formyl group to the free amino group of methionyl-tRNA(fMet). The formyl group appears to play a dual role in the initiator identity of N-formylmethionyl-tRNA by promoting its recognition by IF2 and preventing the misappropriation of this tRNA by the elongation apparatus. In Wolbachia pipientis subsp. Culex pipiens (strain wPip), this protein is Methionyl-tRNA formyltransferase.